Consider the following 266-residue polypeptide: Thymidylate synthase (266 aa).

R24 is a dUMP binding site. H54 is a binding site for (6R)-5,10-methylene-5,6,7,8-tetrahydrofolate. Residue 129–130 (RR) participates in dUMP binding. C149 functions as the Nucleophile in the catalytic mechanism. Residues 169-172 (RSAD), N180, and 210-212 (HIY) contribute to the dUMP site. D172 serves as a coordination point for (6R)-5,10-methylene-5,6,7,8-tetrahydrofolate. A265 serves as a coordination point for (6R)-5,10-methylene-5,6,7,8-tetrahydrofolate.

The protein belongs to the thymidylate synthase family. Bacterial-type ThyA subfamily. As to quaternary structure, homodimer.

The protein resides in the cytoplasm. It carries out the reaction dUMP + (6R)-5,10-methylene-5,6,7,8-tetrahydrofolate = 7,8-dihydrofolate + dTMP. Its pathway is pyrimidine metabolism; dTTP biosynthesis. In terms of biological role, catalyzes the reductive methylation of 2'-deoxyuridine-5'-monophosphate (dUMP) to 2'-deoxythymidine-5'-monophosphate (dTMP) while utilizing 5,10-methylenetetrahydrofolate (mTHF) as the methyl donor and reductant in the reaction, yielding dihydrofolate (DHF) as a by-product. This enzymatic reaction provides an intracellular de novo source of dTMP, an essential precursor for DNA biosynthesis. The chain is Thymidylate synthase from Mycolicibacterium paratuberculosis (strain ATCC BAA-968 / K-10) (Mycobacterium paratuberculosis).